The following is a 38-amino-acid chain: MKVRASVRKICENCRLIKRRGTVMVICSNNPKHKQRQG.

The protein belongs to the bacterial ribosomal protein bL36 family.

Its subcellular location is the plastid. The protein localises to the chloroplast. The chain is Large ribosomal subunit protein bL36c (rpl36) from Mesostigma viride (Green alga).